The chain runs to 122 residues: Large ribosomal subunit protein uL24 (122 aa).

The protein belongs to the universal ribosomal protein uL24 family. In terms of assembly, part of the 50S ribosomal subunit.

Its function is as follows. One of two assembly initiator proteins, it binds directly to the 5'-end of the 23S rRNA, where it nucleates assembly of the 50S subunit. One of the proteins that surrounds the polypeptide exit tunnel on the outside of the subunit. The protein is Large ribosomal subunit protein uL24 of Renibacterium salmoninarum (strain ATCC 33209 / DSM 20767 / JCM 11484 / NBRC 15589 / NCIMB 2235).